The sequence spans 361 residues: MTVSTAQMRFWSPEVRELEPYVPGEQPKIQNLLKLNTNENPYPPSPKVVEAVQAVLHEQADALRLYPDPDATALKQAIAKQQNIDVSQVFVGNGSDEVLAHIFKAFFLQDEPILYPDITYSFYPVYSQFFGTKTKEIPLNENFEIDVRDYTQPNGGVIITNPNAPTSIALSLAEIEQVLQANPDCVVVIDEAYVDFGAESAVSLINRYENLVVCQTTSKSRSLAGLRVGFAIAQSHLIAALEAVKNSFNSYPIDRFAIAAAVASFEDQAYFEEQCQKVITSREKLVRDLTELGFNVLPSKANFIFATHSQHDAGQLAQKLREQGIIVRYFNKPRINQFLRITVGTDEQNARLVQTLKQDIL.

At lysine 219 the chain carries N6-(pyridoxal phosphate)lysine.

Belongs to the class-II pyridoxal-phosphate-dependent aminotransferase family. Histidinol-phosphate aminotransferase subfamily. As to quaternary structure, homodimer. It depends on pyridoxal 5'-phosphate as a cofactor.

The enzyme catalyses L-histidinol phosphate + 2-oxoglutarate = 3-(imidazol-4-yl)-2-oxopropyl phosphate + L-glutamate. It participates in amino-acid biosynthesis; L-histidine biosynthesis; L-histidine from 5-phospho-alpha-D-ribose 1-diphosphate: step 7/9. The polypeptide is Histidinol-phosphate aminotransferase (Acinetobacter baumannii (strain SDF)).